Consider the following 361-residue polypeptide: Chorismate synthase (361 aa).

The NADP(+) site is built by Arg48 and Arg54. Residues 125–127 (RSS), 238–239 (NA), Gly278, 293–297 (KPTSS), and Arg319 each bind FMN.

It belongs to the chorismate synthase family. As to quaternary structure, homotetramer. Requires FMNH2 as cofactor.

It carries out the reaction 5-O-(1-carboxyvinyl)-3-phosphoshikimate = chorismate + phosphate. It participates in metabolic intermediate biosynthesis; chorismate biosynthesis; chorismate from D-erythrose 4-phosphate and phosphoenolpyruvate: step 7/7. Functionally, catalyzes the anti-1,4-elimination of the C-3 phosphate and the C-6 proR hydrogen from 5-enolpyruvylshikimate-3-phosphate (EPSP) to yield chorismate, which is the branch point compound that serves as the starting substrate for the three terminal pathways of aromatic amino acid biosynthesis. This reaction introduces a second double bond into the aromatic ring system. In Sodalis glossinidius (strain morsitans), this protein is Chorismate synthase.